The chain runs to 70 residues: Small ribosomal subunit protein bS21A (70 aa).

This sequence belongs to the bacterial ribosomal protein bS21 family.

This is Small ribosomal subunit protein bS21A from Paraburkholderia xenovorans (strain LB400).